The chain runs to 534 residues: Cytokine-like nuclear factor N-PAC (534 aa).

The PWWP domain maps to 8–66 (QGDLVWGKLGRYPPWPGKIVNPPKDLKKPRGKKCLFVKFFGTEDHAWIKVEQLKPYHAH). Composition is skewed to basic and acidic residues over residues 93 to 122 (AKAK…QTGE) and 138 to 157 (RSRD…DKDS). The disordered stretch occupies residues 93–168 (AKAKEHAKEH…SPQPSSLKKL (76 aa)). Residues 144–156 (PRKRGRPPKDDKD) constitute a DNA-binding region (a.T hook). The tract at residues 190–193 (DSWL) is interaction with histone H3. The tract at residues 242-534 (GNIIPTDKKI…MSAVYRAYIH (293 aa)) is dehydrogenase domain. Residues 252-266 (GFLG…IVSN), Thr343, and Lys486 contribute to the NAD(+) site.

This sequence belongs to the HIBADH-related family. NP60 subfamily. Homotetramere. Binds to mononucleosomes.

Its subcellular location is the nucleus. It localises to the chromosome. Cytokine-like nuclear factor with chromatin gene reader activity involved in chromatin modification and regulation of gene expression. Acts as a nucleosome-destabilizing factor that is recruited to genes during transcriptional activation. Recognizes and binds histone H3 without a preference for specific epigenetic markers and also binds DNA. Interacts with KDM1B and promotes its histone demethylase activity by facilitating the capture of H3 tails, they form a multifunctional enzyme complex that modifies transcribed chromatin and facilitates Pol II transcription through nucleosomes. This is Cytokine-like nuclear factor N-PAC (glyr1) from Xenopus tropicalis (Western clawed frog).